The chain runs to 369 residues: MKKSHLYNRSLLSVTIILLIFSIIMVGSSSVSVGNRIRTDYLSFLKKNFIHSIISILCMIFVFNVPIYKWKKNKNKLILCSIILLLTLNYFGISNHGAKRWINIKIAFIQPSELVKISFSCYLSSYLSEKNKKTSTIQLISIILIVSKLLLSQPDFGTLVILYSSLLFMLFLIGKNFLFLSASSAIFTTIVLSLIYFRSYRAKRLISFLNPWSNYLGDGYQLVHSMLSFGRGKMFGQGIGNSIQKINFLPEPHTDFIISIIGEELGYLGIAMIVISLFFIFFQGMNIGRNALKDFQYFSGFLAYSISLLIIIQSIINIGSSIGILPIKGTTLPIISYGGSSKLITCIKIAILLRIDFETKMNKIQAFRR.

8 helical membrane-spanning segments follow: residues 11 to 31, 48 to 68, 77 to 97, 134 to 151, 154 to 174, 177 to 197, 265 to 285, and 306 to 326; these read LLSV…SSSV, NFIH…VPIY, LILC…SNHG, TSTI…KLLL, PDFG…FLIG, FLFL…LIYF, LGYL…FQGM, and ISLL…GILP.

This sequence belongs to the SEDS family. FtsW subfamily.

It localises to the cell inner membrane. The catalysed reaction is [GlcNAc-(1-&gt;4)-Mur2Ac(oyl-L-Ala-gamma-D-Glu-L-Lys-D-Ala-D-Ala)](n)-di-trans,octa-cis-undecaprenyl diphosphate + beta-D-GlcNAc-(1-&gt;4)-Mur2Ac(oyl-L-Ala-gamma-D-Glu-L-Lys-D-Ala-D-Ala)-di-trans,octa-cis-undecaprenyl diphosphate = [GlcNAc-(1-&gt;4)-Mur2Ac(oyl-L-Ala-gamma-D-Glu-L-Lys-D-Ala-D-Ala)](n+1)-di-trans,octa-cis-undecaprenyl diphosphate + di-trans,octa-cis-undecaprenyl diphosphate + H(+). Its pathway is cell wall biogenesis; peptidoglycan biosynthesis. Its function is as follows. Peptidoglycan polymerase that is essential for cell division. The polypeptide is Probable peptidoglycan glycosyltransferase FtsW (Riesia pediculicola (strain USDA)).